Consider the following 152-residue polypeptide: Endoribonuclease YbeY (152 aa).

His-111, His-115, and His-121 together coordinate Zn(2+).

The protein belongs to the endoribonuclease YbeY family. The cofactor is Zn(2+).

It is found in the cytoplasm. Single strand-specific metallo-endoribonuclease involved in late-stage 70S ribosome quality control and in maturation of the 3' terminus of the 16S rRNA. This is Endoribonuclease YbeY from Pseudomonas fluorescens (strain ATCC BAA-477 / NRRL B-23932 / Pf-5).